Consider the following 376-residue polypeptide: Alanine racemase (376 aa).

Lys-40 acts as the Proton acceptor; specific for D-alanine in catalysis. Lys-40 carries the N6-(pyridoxal phosphate)lysine modification. Arg-138 contributes to the substrate binding site. Residue Tyr-270 is the Proton acceptor; specific for L-alanine of the active site. Met-317 contributes to the substrate binding site.

Belongs to the alanine racemase family. It depends on pyridoxal 5'-phosphate as a cofactor.

The catalysed reaction is L-alanine = D-alanine. It participates in amino-acid biosynthesis; D-alanine biosynthesis; D-alanine from L-alanine: step 1/1. Its function is as follows. Catalyzes the interconversion of L-alanine and D-alanine. May also act on other amino acids. This is Alanine racemase (alr) from Lactobacillus gasseri (strain ATCC 33323 / DSM 20243 / BCRC 14619 / CIP 102991 / JCM 1131 / KCTC 3163 / NCIMB 11718 / NCTC 13722 / AM63).